We begin with the raw amino-acid sequence, 2885 residues long: E3 ubiquitin-protein ligase hyd (2885 aa).

The disordered stretch occupies residues 83–138 (SDAKCSTSGGSGTASASKAPSSSRPMARSRARLLRATGRSNSTGQGSGSRSTGVII). Low complexity-rich tracts occupy residues 95-108 (TASA…SRPM) and 116-138 (LRAT…GVII). The 43-residue stretch at 154-196 (YVPEELISQAEVVLQGKSRNLIIRELQRTNLDVNLAVNNLLSR) folds into the UBA domain. Residues 266-276 (ANANAADSNQS) show a composition bias toward low complexity. Disordered stretches follow at residues 266 to 291 (ANAN…TGNS), 580 to 664 (NNLN…GRKD), and 711 to 731 (AATS…KEDD). Polar residues-rich tracts occupy residues 277-291 (TTRS…TGNS) and 598-615 (AMPS…SNSK). Residues serine 628 and serine 631 each carry the phosphoserine modification. Positions 650–664 (TTKEDSNAPQEGRKD) are enriched in basic and acidic residues. The segment covering 711–722 (AATSSTSNTAST) has biased composition (low complexity). Serine 967 carries the phosphoserine modification. Residues 1008–1032 (ASSSNENSSFATMSSSAAGSASSTS) show a composition bias toward low complexity. Residues 1008–1035 (ASSSNENSSFATMSSSAAGSASSTSRDN) form a disordered region. The segment at 1217–1285 (DTCSFTWTGA…EKCKCKALIA (69 aa)) adopts a UBR-type zinc-finger fold. At serine 1362 the chain carries Phosphoserine. The interval 1642-1761 (NEDGMQDDES…IRSRDTARSS (120 aa)) is disordered. Over residues 1669–1681 (NQSNQEVQRSVQA) the composition is skewed to polar residues. Residues 1696-1721 (LEDESGDSSAQEEDGSEDGESDDQSD) are compositionally biased toward acidic residues. Polar residues predominate over residues 1735-1749 (TNSNARSDLAPQTMQ). Serine 2037 is subject to Phosphoserine. A disordered region spans residues 2124–2143 (IDSSKTGDGNVTNKAEGSTD). Serine 2183 is subject to Phosphoserine. The tract at residues 2473–2492 (NLDARPYTPPNSSDNATPES) is disordered. A compositionally biased stretch (polar residues) spans 2482-2492 (PNSSDNATPES). One can recognise a PABC domain in the interval 2484 to 2561 (SSDNATPESL…AIEIITFKQK (78 aa)). Serine 2574 carries the phosphoserine modification. Residues 2782-2885 (FNDESSEGPD…AIKSKNFGFV (104 aa)) enclose the HECT domain. Cysteine 2854 functions as the Glycyl thioester intermediate in the catalytic mechanism.

It belongs to the UBR5 family.

The protein localises to the nucleus. Its subcellular location is the cytoplasm. The enzyme catalyses S-ubiquitinyl-[E2 ubiquitin-conjugating enzyme]-L-cysteine + [acceptor protein]-L-lysine = [E2 ubiquitin-conjugating enzyme]-L-cysteine + N(6)-ubiquitinyl-[acceptor protein]-L-lysine.. It functions in the pathway protein modification; protein ubiquitination. E3 ubiquitin-protein ligase which accepts ubiquitin from an E2 ubiquitin-conjugating enzyme in the form of a thioester and then directly transfers the ubiquitin to targeted substrate. Required for regulation of cell proliferation in imaginal disks and germ cells. Acts as a negative regulator of hh, ci and dpp expression in the anterior of the eye disk. Acts as a positive regulator of the canonical Wnt signaling pathway by mediating ubiquitination and degradation of gro. Catalyzes 'Lys-63'-linked polyubiquitination of akirin, thereby activating the immune deficiency pathway (Imd). In Drosophila melanogaster (Fruit fly), this protein is E3 ubiquitin-protein ligase hyd (hyd).